A 289-amino-acid chain; its full sequence is Acetyl-coenzyme A carboxylase carboxyl transferase subunit beta (289 aa).

Positions 28 to 289 (VMTKCPKCKK…QGEGMAVWQN (262 aa)) constitute a CoA carboxyltransferase N-terminal domain. Zn(2+)-binding residues include C32, C35, C51, and C54. Residues 32–54 (CPKCKKIMYTKELLKNLKVCVNC) form a C4-type zinc finger.

This sequence belongs to the AccD/PCCB family. As to quaternary structure, acetyl-CoA carboxylase is a heterohexamer composed of biotin carboxyl carrier protein (AccB), biotin carboxylase (AccC) and two subunits each of ACCase subunit alpha (AccA) and ACCase subunit beta (AccD). Requires Zn(2+) as cofactor.

It is found in the cytoplasm. It carries out the reaction N(6)-carboxybiotinyl-L-lysyl-[protein] + acetyl-CoA = N(6)-biotinyl-L-lysyl-[protein] + malonyl-CoA. The protein operates within lipid metabolism; malonyl-CoA biosynthesis; malonyl-CoA from acetyl-CoA: step 1/1. In terms of biological role, component of the acetyl coenzyme A carboxylase (ACC) complex. Biotin carboxylase (BC) catalyzes the carboxylation of biotin on its carrier protein (BCCP) and then the CO(2) group is transferred by the transcarboxylase to acetyl-CoA to form malonyl-CoA. This Bacillus cytotoxicus (strain DSM 22905 / CIP 110041 / 391-98 / NVH 391-98) protein is Acetyl-coenzyme A carboxylase carboxyl transferase subunit beta.